We begin with the raw amino-acid sequence, 154 residues long: Transcription antitermination protein NusB (154 aa).

Belongs to the NusB family.

Functionally, involved in transcription antitermination. Required for transcription of ribosomal RNA (rRNA) genes. Binds specifically to the boxA antiterminator sequence of the ribosomal RNA (rrn) operons. This Hyphomonas neptunium (strain ATCC 15444) protein is Transcription antitermination protein NusB.